The following is an 88-amino-acid chain: Cell division topological specificity factor (88 aa).

The protein belongs to the MinE family.

Prevents the cell division inhibition by proteins MinC and MinD at internal division sites while permitting inhibition at polar sites. This ensures cell division at the proper site by restricting the formation of a division septum at the midpoint of the long axis of the cell. The polypeptide is Cell division topological specificity factor (Aromatoleum aromaticum (strain DSM 19018 / LMG 30748 / EbN1) (Azoarcus sp. (strain EbN1))).